The primary structure comprises 80 residues: Putative membrane protein insertion efficiency factor (80 aa).

The disordered stretch occupies residues 61–80 (KTGKDPVPDHFSLKRNQEGE). The span at 62-80 (TGKDPVPDHFSLKRNQEGE) shows a compositional bias: basic and acidic residues.

It belongs to the UPF0161 family.

Its subcellular location is the cell membrane. In terms of biological role, could be involved in insertion of integral membrane proteins into the membrane. The polypeptide is Putative membrane protein insertion efficiency factor (Streptococcus pneumoniae serotype 19F (strain G54)).